Consider the following 864-residue polypeptide: NT-3 growth factor receptor (864 aa).

A signal peptide spans 1-31 (MDVSLCPAKCSFWRIFLLGSVWLDYVGSVLA). 2 disulfides stabilise this stretch: cysteine 32–cysteine 38 and cysteine 36–cysteine 45. At 32–429 (CPANCVCSKT…TVTHKPEEDT (398 aa)) the chain is on the extracellular side. N-linked (GlcNAc...) asparagine glycans are attached at residues asparagine 68, asparagine 72, and asparagine 79. LRR repeat units follow at residues 104–125 (GLQK…AFAK) and 128–149 (HLRY…LFQT). Residues asparagine 133 and asparagine 163 are each glycosylated (N-linked (GlcNAc...) asparagine). Positions 160–209 (NFFNCSCDIRWMQLWQEQGEARLDSQSLYCISADGSQLPLFRMNISQCDL) constitute an LRRCT domain. 2 disulfides stabilise this stretch: cysteine 164–cysteine 189 and cysteine 166–cysteine 207. Residues asparagine 203, asparagine 218, asparagine 232, asparagine 259, asparagine 267, asparagine 272, and asparagine 294 are each glycosylated (N-linked (GlcNAc...) asparagine). Ig-like C2-type domains lie at 210–300 (PEIS…VALT) and 309–382 (SLVE…IAKN). Cysteine 231 and cysteine 284 are joined by a disulfide. The cysteines at positions 320 and 362 are disulfide-linked. Residues asparagine 375 and asparagine 388 are each glycosylated (N-linked (GlcNAc...) asparagine). Residues 430-453 (FGVSIAVGLAAFACVLLVVLFIMI) traverse the membrane as a helical segment. At 454–864 (NKYGRRSKFG…ATPIYLDILG (411 aa)) the chain is on the cytoplasmic side. Phosphoserine is present on serine 493. Position 516 is a phosphotyrosine; by autocatalysis (tyrosine 516). Residues 538-853 (IVLKRELGEG…EIYKILHALG (316 aa)) enclose the Protein kinase domain. ATP-binding positions include 544-552 (LGEGAFGKV) and lysine 572. The Proton acceptor role is filled by aspartate 679. Tyrosine 705, tyrosine 709, tyrosine 710, and tyrosine 859 each carry phosphotyrosine; by autocatalysis.

The protein belongs to the protein kinase superfamily. Tyr protein kinase family. Insulin receptor subfamily. Exists in a dynamic equilibrium between monomeric (low affinity) and dimeric (high affinity) structures. Binds SH2B2. Interacts with SQSTM1 and KIDINS220. Interacts with PTPRS. Interacts with MAPK8IP3/JIP3. Post-translationally, ligand-mediated auto-phosphorylation. As to expression, widely expressed, mainly in the nervous tissue.

It localises to the membrane. It carries out the reaction L-tyrosyl-[protein] + ATP = O-phospho-L-tyrosyl-[protein] + ADP + H(+). Its function is as follows. Receptor tyrosine kinase involved in nervous system and probably heart development. Upon binding of its ligand NTF3/neurotrophin-3, NTRK3 autophosphorylates and activates different signaling pathways, including the phosphatidylinositol 3-kinase/AKT and the MAPK pathways, that control cell survival and differentiation. NTRK3 isoforms containing insertions within the kinase domain can autophosphorylate in response to NTF3/neurotrophin-3, but cannot mediate downstream phenotypic responses. This is NT-3 growth factor receptor (Ntrk3) from Rattus norvegicus (Rat).